A 514-amino-acid chain; its full sequence is Peptide chain release factor 3 (514 aa).

In terms of domain architecture, tr-type G spans 8–268; that stretch reads KKRRTFAIIS…TFLEFAPEPH (261 aa). Residues 17–24, 85–89, and 139–142 contribute to the GTP site; these read SHPDAGKT, DTPGH, and NKLD.

This sequence belongs to the TRAFAC class translation factor GTPase superfamily. Classic translation factor GTPase family. PrfC subfamily.

The protein resides in the cytoplasm. In terms of biological role, increases the formation of ribosomal termination complexes and stimulates activities of RF-1 and RF-2. It binds guanine nucleotides and has strong preference for UGA stop codons. It may interact directly with the ribosome. The stimulation of RF-1 and RF-2 is significantly reduced by GTP and GDP, but not by GMP. In Streptococcus pyogenes serotype M18 (strain MGAS8232), this protein is Peptide chain release factor 3.